The sequence spans 95 residues: Glutamyl-tRNA(Gln) amidotransferase subunit C 1 (95 aa).

This sequence belongs to the GatC family. Heterotrimer of A, B and C subunits.

It carries out the reaction L-glutamyl-tRNA(Gln) + L-glutamine + ATP + H2O = L-glutaminyl-tRNA(Gln) + L-glutamate + ADP + phosphate + H(+). It catalyses the reaction L-aspartyl-tRNA(Asn) + L-glutamine + ATP + H2O = L-asparaginyl-tRNA(Asn) + L-glutamate + ADP + phosphate + 2 H(+). In terms of biological role, allows the formation of correctly charged Asn-tRNA(Asn) or Gln-tRNA(Gln) through the transamidation of misacylated Asp-tRNA(Asn) or Glu-tRNA(Gln) in organisms which lack either or both of asparaginyl-tRNA or glutaminyl-tRNA synthetases. The reaction takes place in the presence of glutamine and ATP through an activated phospho-Asp-tRNA(Asn) or phospho-Glu-tRNA(Gln). This is Glutamyl-tRNA(Gln) amidotransferase subunit C 1 (gatC1) from Clostridium acetobutylicum (strain ATCC 824 / DSM 792 / JCM 1419 / IAM 19013 / LMG 5710 / NBRC 13948 / NRRL B-527 / VKM B-1787 / 2291 / W).